The primary structure comprises 66 residues: Large ribosomal subunit protein bL31 (66 aa).

Zn(2+) is bound by residues Cys16, Cys18, Cys36, and Cys39.

Belongs to the bacterial ribosomal protein bL31 family. Type A subfamily. Part of the 50S ribosomal subunit. Requires Zn(2+) as cofactor.

Binds the 23S rRNA. This Sulfurovum sp. (strain NBC37-1) protein is Large ribosomal subunit protein bL31.